The following is a 358-amino-acid chain: Methylthioribose-1-phosphate isomerase (358 aa).

Substrate is bound by residues arginine 54 to alanine 56, arginine 96, and glutamine 205. The active-site Proton donor is the aspartate 246. Asparagine 256 to lysine 257 contributes to the substrate binding site.

The protein belongs to the eIF-2B alpha/beta/delta subunits family. MtnA subfamily.

It carries out the reaction 5-(methylsulfanyl)-alpha-D-ribose 1-phosphate = 5-(methylsulfanyl)-D-ribulose 1-phosphate. It participates in amino-acid biosynthesis; L-methionine biosynthesis via salvage pathway; L-methionine from S-methyl-5-thio-alpha-D-ribose 1-phosphate: step 1/6. Its function is as follows. Catalyzes the interconversion of methylthioribose-1-phosphate (MTR-1-P) into methylthioribulose-1-phosphate (MTRu-1-P). The polypeptide is Methylthioribose-1-phosphate isomerase (Azotobacter vinelandii (strain DJ / ATCC BAA-1303)).